A 467-amino-acid chain; its full sequence is Dimethylamine methyltransferase MtbB1 (467 aa).

Position 356 (O356) is a non-standard amino acid, pyrrolysine.

It belongs to the dimethylamine methyltransferase family.

It catalyses the reaction Co(I)-[dimethylamine-specific corrinoid protein] + dimethylamine + H(+) = methyl-Co(III)-[dimethylamine-specific corrinoid protein] + methylamine. The protein operates within one-carbon metabolism; methanogenesis from dimethylamine. In terms of biological role, catalyzes the transfer of a methyl group from dimethylamine to the corrinoid cofactor of MtbC. The sequence is that of Dimethylamine methyltransferase MtbB1 (mtbB1) from Methanosarcina barkeri (strain Fusaro / DSM 804).